The chain runs to 144 residues: Virulence protein STM3117 (144 aa).

One can recognise a VOC domain in the interval 23–143 (RIDHLVLTVS…DGNLIEISQY (121 aa)).

Its function is as follows. Is critically involved in promoting the replication of S.typhimurium cells inside host macrophages, suggesting a role in the establishment of bacterial colonization within macrophages. May be involved in the biosynthesis and modification of the peptidoglycan layer of the cell wall. The chain is Virulence protein STM3117 from Salmonella typhimurium (strain LT2 / SGSC1412 / ATCC 700720).